The following is a 471-amino-acid chain: Glutamate--tRNA ligase (471 aa).

The 'HIGH' region motif lies at 9–19 (PSPTGYLHVGG). Positions 98, 100, 125, and 127 each coordinate Zn(2+). Positions 237-241 (KLSKR) match the 'KMSKS' region motif. K240 is a binding site for ATP.

This sequence belongs to the class-I aminoacyl-tRNA synthetase family. Glutamate--tRNA ligase type 1 subfamily. In terms of assembly, monomer. Zn(2+) is required as a cofactor.

It localises to the cytoplasm. The enzyme catalyses tRNA(Glu) + L-glutamate + ATP = L-glutamyl-tRNA(Glu) + AMP + diphosphate. Its function is as follows. Catalyzes the attachment of glutamate to tRNA(Glu) in a two-step reaction: glutamate is first activated by ATP to form Glu-AMP and then transferred to the acceptor end of tRNA(Glu). This is Glutamate--tRNA ligase from Shigella flexneri.